Consider the following 175-residue polypeptide: Nucleoside-triphosphatase THEP1 (175 aa).

Residues 8–15 and 99–106 contribute to the ATP site; these read GSPGVGKS and LVVIDEIG.

Belongs to the THEP1 NTPase family.

It catalyses the reaction a ribonucleoside 5'-triphosphate + H2O = a ribonucleoside 5'-diphosphate + phosphate + H(+). Has nucleotide phosphatase activity towards ATP, GTP, CTP, TTP and UTP. May hydrolyze nucleoside diphosphates with lower efficiency. In Methanosarcina acetivorans (strain ATCC 35395 / DSM 2834 / JCM 12185 / C2A), this protein is Nucleoside-triphosphatase THEP1.